The following is a 408-amino-acid chain: Dual-specificity RNA methyltransferase RlmN (408 aa).

Glu126 serves as the catalytic Proton acceptor. The region spanning 132 to 373 (EEGRGTLCLS…NQAGYASPIR (242 aa)) is the Radical SAM core domain. A disulfide bond links Cys139 and Cys384. Positions 146, 150, and 153 each coordinate [4Fe-4S] cluster. S-adenosyl-L-methionine is bound by residues 210 to 211 (GE), Ser242, 264 to 266 (SLH), and Asn341. Cys384 acts as the S-methylcysteine intermediate in catalysis.

It belongs to the radical SAM superfamily. RlmN family. It depends on [4Fe-4S] cluster as a cofactor.

Its subcellular location is the cytoplasm. It catalyses the reaction adenosine(2503) in 23S rRNA + 2 reduced [2Fe-2S]-[ferredoxin] + 2 S-adenosyl-L-methionine = 2-methyladenosine(2503) in 23S rRNA + 5'-deoxyadenosine + L-methionine + 2 oxidized [2Fe-2S]-[ferredoxin] + S-adenosyl-L-homocysteine. The enzyme catalyses adenosine(37) in tRNA + 2 reduced [2Fe-2S]-[ferredoxin] + 2 S-adenosyl-L-methionine = 2-methyladenosine(37) in tRNA + 5'-deoxyadenosine + L-methionine + 2 oxidized [2Fe-2S]-[ferredoxin] + S-adenosyl-L-homocysteine. In terms of biological role, specifically methylates position 2 of adenine 2503 in 23S rRNA and position 2 of adenine 37 in tRNAs. m2A2503 modification seems to play a crucial role in the proofreading step occurring at the peptidyl transferase center and thus would serve to optimize ribosomal fidelity. The sequence is that of Dual-specificity RNA methyltransferase RlmN from Bartonella tribocorum (strain CIP 105476 / IBS 506).